Reading from the N-terminus, the 156-residue chain is MLRQFIVSTVGRRLQLPMMAQSRLASNLDKTEYTTPGEIVDYDDPPHLPVPEYPVRPDEPLEIRKQRLLYQSRKRGMLENDLLLSTFVAKHLKDFNAEQTAEYDQLINGVSNDWDIFYWATDTKPTPPQFDTEIMRLLKEHVKNHEKVQRIRQPDL.

The N-terminal 24 residues, methionine 1–leucine 24, are a transit peptide targeting the mitochondrion.

This sequence belongs to the SDHAF2 family. As to quaternary structure, interacts with the flavoprotein subunit within the SDH catalytic dimer.

It localises to the mitochondrion matrix. Its function is as follows. Plays an essential role in the assembly of succinate dehydrogenase (SDH), an enzyme complex (also referred to as respiratory complex II) that is a component of both the tricarboxylic acid (TCA) cycle and the mitochondrial electron transport chain, and which couples the oxidation of succinate to fumarate with the reduction of ubiquinone (coenzyme Q) to ubiquinol. Required for flavinylation (covalent attachment of FAD) of the flavoprotein subunit of the SDH catalytic dimer. In Drosophila simulans (Fruit fly), this protein is Succinate dehydrogenase assembly factor 2-B, mitochondrial.